The following is a 603-amino-acid chain: Conglutin beta 2 (603 aa).

Positions 1-30 (MANMRVKFPTLVLLLGIVFLMAVSIGIAYG) are cleaved as a signal peptide. Basic and acidic residues predominate over residues 36-105 (KNHERPQERE…REPSRGREQE (70 aa)). Disordered regions lie at residues 36 to 177 (KNHE…RNPY), 343 to 363 (DGQE…DQGV), and 375 to 399 (LRKH…LRSD). The segment covering 137 to 147 (QGSSSSSGRQS) has biased composition (low complexity). The span at 148-172 (GYERREQREEREQQQEQDSRSESRR) shows a compositional bias: basic and acidic residues. Positions 177 to 335 (YYFSYERFQT…TFNTRYEEIQ (159 aa)) constitute a Cupin type-1 1 domain. The segment covering 381 to 393 (SSSGKGKPSESGP) has biased composition (low complexity). In terms of domain architecture, Cupin type-1 2 spans 394–554 (FNLRSDEPIY…TFPGSVEDVE (161 aa)). N-linked (GlcNAc...) asparagine glycosylation occurs at Asn504. Residues 564–574 (YFANAQPQQQQ) show a composition bias toward low complexity. The disordered stretch occupies residues 564-583 (YFANAQPQQQQQREKEGRRG).

Belongs to the 7S seed storage protein family. Component of globulins complexes which accumulate in seeds.

Seed storage protein. Accumulates during seed development and is hydrolyzed after germination to provide a carbon and nitrogen source for the developing seedling. In Lupinus angustifolius (Narrow-leaved blue lupine), this protein is Conglutin beta 2.